The chain runs to 214 residues: Ribonuclease HII (214 aa).

The region spanning 26–214 (EIVCGVDEAG…PVREAFDLIR (189 aa)) is the RNase H type-2 domain. The a divalent metal cation site is built by aspartate 32, glutamate 33, and aspartate 124.

The protein belongs to the RNase HII family. Mn(2+) serves as cofactor. Requires Mg(2+) as cofactor.

It localises to the cytoplasm. The catalysed reaction is Endonucleolytic cleavage to 5'-phosphomonoester.. Functionally, endonuclease that specifically degrades the RNA of RNA-DNA hybrids. The polypeptide is Ribonuclease HII (Burkholderia pseudomallei (strain 1710b)).